A 437-amino-acid polypeptide reads, in one-letter code: Protein translocase subunit SecY (437 aa).

Transmembrane regions (helical) follow at residues 19-39, 69-89, 122-142, 157-177, 189-209, 219-239, 275-295, 318-338, 378-398, and 400-420; these read LFTL…IPGV, LLQI…SIIL, VALA…GALF, IFTT…VMWL, GMSI…LWAI, WIEF…VVFV, GVIP…IVQF, HIIL…AISF, GSLY…GFGA, and QNFP…LETV.

It belongs to the SecY/SEC61-alpha family. As to quaternary structure, component of the Sec protein translocase complex. Heterotrimer consisting of SecY, SecE and SecG subunits. The heterotrimers can form oligomers, although 1 heterotrimer is thought to be able to translocate proteins. Interacts with the ribosome. Interacts with SecDF, and other proteins may be involved. Interacts with SecA.

It is found in the cell membrane. In terms of biological role, the central subunit of the protein translocation channel SecYEG. Consists of two halves formed by TMs 1-5 and 6-10. These two domains form a lateral gate at the front which open onto the bilayer between TMs 2 and 7, and are clamped together by SecE at the back. The channel is closed by both a pore ring composed of hydrophobic SecY resides and a short helix (helix 2A) on the extracellular side of the membrane which forms a plug. The plug probably moves laterally to allow the channel to open. The ring and the pore may move independently. The protein is Protein translocase subunit SecY of Streptomyces coelicolor (strain ATCC BAA-471 / A3(2) / M145).